We begin with the raw amino-acid sequence, 153 residues long: NAD(P)H-quinone oxidoreductase subunit N (153 aa).

It belongs to the complex I NdhN subunit family. As to quaternary structure, NDH-1 can be composed of about 15 different subunits; different subcomplexes with different compositions have been identified which probably have different functions.

The protein localises to the cellular thylakoid membrane. It catalyses the reaction a plastoquinone + NADH + (n+1) H(+)(in) = a plastoquinol + NAD(+) + n H(+)(out). It carries out the reaction a plastoquinone + NADPH + (n+1) H(+)(in) = a plastoquinol + NADP(+) + n H(+)(out). In terms of biological role, NDH-1 shuttles electrons from an unknown electron donor, via FMN and iron-sulfur (Fe-S) centers, to quinones in the respiratory and/or the photosynthetic chain. The immediate electron acceptor for the enzyme in this species is believed to be plastoquinone. Couples the redox reaction to proton translocation, and thus conserves the redox energy in a proton gradient. Cyanobacterial NDH-1 also plays a role in inorganic carbon-concentration. The polypeptide is NAD(P)H-quinone oxidoreductase subunit N (Prochlorococcus marinus (strain MIT 9211)).